The primary structure comprises 111 residues: Kalata-B7 (111 aa).

Positions 1–28 (MAKFTNCLALCLLLAAVVGAFGVELSEA) are cleaved as a signal peptide. Residues 29–75 (DKSAVVNEIAEKMALQEMLDGVDKLFLRKMKSSETTLTMFLKEMQLK) constitute a propeptide that is removed on maturation. The segment at residues 76–104 (GLPVCGETCTLGTCYTQGCTCSWPICKRN) is a cross-link (cyclopeptide (Gly-Asn)). Intrachain disulfides connect C80-C94, C84-C96, and C89-C101. Residues 105–111 (GLPDVAA) constitute a propeptide that is removed on maturation.

In terms of processing, kalata-B7 is a cyclic peptide.

In terms of biological role, probably participates in a plant defense mechanism. Has hemolytic activity. The protein is Kalata-B7 (OAK3) of Oldenlandia affinis.